The sequence spans 273 residues: Ribosomal RNA small subunit methyltransferase A (273 aa).

S-adenosyl-L-methionine-binding residues include N18, L20, G45, E66, D91, and N113.

This sequence belongs to the class I-like SAM-binding methyltransferase superfamily. rRNA adenine N(6)-methyltransferase family. RsmA subfamily.

It is found in the cytoplasm. It carries out the reaction adenosine(1518)/adenosine(1519) in 16S rRNA + 4 S-adenosyl-L-methionine = N(6)-dimethyladenosine(1518)/N(6)-dimethyladenosine(1519) in 16S rRNA + 4 S-adenosyl-L-homocysteine + 4 H(+). In terms of biological role, specifically dimethylates two adjacent adenosines (A1518 and A1519) in the loop of a conserved hairpin near the 3'-end of 16S rRNA in the 30S particle. May play a critical role in biogenesis of 30S subunits. This is Ribosomal RNA small subunit methyltransferase A from Klebsiella pneumoniae (strain 342).